The following is a 281-amino-acid chain: Pantothenate synthetase (281 aa).

Met30 to His37 lines the ATP pocket. His37 acts as the Proton donor in catalysis. Residue Gln61 participates in (R)-pantoate binding. Position 61 (Gln61) interacts with beta-alanine. Gly147–Asp150 is a binding site for ATP. Gln153 is a (R)-pantoate binding site. ATP contacts are provided by residues Ile176 and Lys184–Arg187.

The protein belongs to the pantothenate synthetase family. Homodimer.

The protein localises to the cytoplasm. The catalysed reaction is (R)-pantoate + beta-alanine + ATP = (R)-pantothenate + AMP + diphosphate + H(+). Its pathway is cofactor biosynthesis; (R)-pantothenate biosynthesis; (R)-pantothenate from (R)-pantoate and beta-alanine: step 1/1. Its function is as follows. Catalyzes the condensation of pantoate with beta-alanine in an ATP-dependent reaction via a pantoyl-adenylate intermediate. The sequence is that of Pantothenate synthetase from Clostridium acetobutylicum (strain ATCC 824 / DSM 792 / JCM 1419 / IAM 19013 / LMG 5710 / NBRC 13948 / NRRL B-527 / VKM B-1787 / 2291 / W).